The primary structure comprises 174 residues: Co-chaperone protein HscB homolog (174 aa).

Residues 2 to 74 (NYFELFKFSP…IRRAEHMLSL (73 aa)) enclose the J domain.

Belongs to the HscB family. In terms of assembly, interacts with HscA and stimulates its ATPase activity.

Co-chaperone involved in the maturation of iron-sulfur cluster-containing proteins. Seems to help targeting proteins to be folded toward HscA. This is Co-chaperone protein HscB homolog from Shewanella sp. (strain ANA-3).